The chain runs to 360 residues: Inward rectifier potassium channel 13 (360 aa).

The Cytoplasmic portion of the chain corresponds to 1–50; that stretch reads MESSNCKVITPLLSQRHRRMVTKDGHSTLQTDGAPRGLVYLRDAWGTLID. The helical transmembrane segment at 51 to 77 threads the bilayer; sequence MRWRWVMLVFSASFVLHWLVFAVLWYV. At 78–105 the chain is on the extracellular side; the sequence is LAEMNGDLELDHDAPPENHTICVKYITS. The helical; Pore-forming intramembrane region spans 106–122; it reads FTAAFSFSLETQLTIGY. A Selectivity filter motif is present at residues 119–124; it reads TIGYGT. Residues 123 to 131 lie on the Extracellular side of the membrane; sequence GTMFPSGDC. The helical transmembrane segment at 132-157 threads the bilayer; sequence PSAIALLAIQMLLGLMLEAFITGAFV. At 158 to 360 the chain is on the cytoplasmic side; it reads AKIARPKNRA…FQISETGLTE (203 aa). S201 carries the phosphoserine; by PKC modification. A Phosphoserine; by PKA modification is found at S287.

It belongs to the inward rectifier-type potassium channel (TC 1.A.2.1) family. KCNJ13 subfamily. As to quaternary structure, homotetramer. In terms of processing, phosphorylation at Ser-201 by PKC strongly inhibits ionic currents, while phosphorylation at Ser-287 by PKA increases them.

The protein localises to the membrane. Its subcellular location is the cell membrane. The catalysed reaction is K(+)(in) = K(+)(out). Its activity is regulated as follows. Inhibited by Ba(2+) and Cs(+), although sensitivity to those inhibitors is much lower than in other Kir channels. Inward rectifier potassium channels are characterized by a greater tendency to allow potassium to flow into the cell rather than out of it. Their voltage dependence is regulated by the concentration of extracellular potassium; as external potassium is raised, the voltage range of the channel opening shifts to more positive voltages. The inward rectification is mainly due to the blockage of outward current by internal magnesium. KCNJ13 has a very low single channel conductance, low sensitivity to block by external barium and cesium, and no dependence of its inward rectification properties on the internal blocking particle magnesium. This Cavia porcellus (Guinea pig) protein is Inward rectifier potassium channel 13 (KCNJ13).